The chain runs to 30 residues: Photosystem I reaction center subunit XII (30 aa).

A helical transmembrane segment spans residues 7–26 (IFVALLFALVSAVLAIRLGK).

The protein belongs to the PsaM family.

It localises to the plastid. The protein resides in the chloroplast thylakoid membrane. In Porphyra purpurea (Red seaweed), this protein is Photosystem I reaction center subunit XII.